The following is a 282-amino-acid chain: Transcription factor MYB1 (282 aa).

HTH myb-type domains are found at residues 9 to 61 and 62 to 116; these read KEGL…LNYL and RPDI…SKKV. DNA-binding regions (H-T-H motif) lie at residues 37–61 and 89–112; these read WRDLPRRAGLKRCGKSCRLRWLNYL and WSLIAGRLPGRTDNEIKNYWNTYL. The segment at 258-282 is disordered; the sequence is EDDWKQNGGKDELMGGGNGGPSSVS. The span at 260 to 270 shows a compositional bias: basic and acidic residues; that stretch reads DWKQNGGKDEL. Over residues 271–282 the composition is skewed to gly residues; sequence MGGGNGGPSSVS.

Its subcellular location is the nucleus. In terms of biological role, transcription activator involved in the spatiotemporal regulation of flavonoid biosynthesis specifically in the corms of Montbretia. Activates the promoters of enzymes involved in the biosynthesis of the flavonol kaempferol and the flavonol-glycoside kaempferol-rhamnoside. The sequence is that of Transcription factor MYB1 from Crocosmia x crocosmiiflora (Montbretia).